The primary structure comprises 1097 residues: DNA-directed RNA polymerase subunit beta (1097 aa).

The interval 1073–1097 is disordered; that stretch reads DINPRRNTPSRPTYESLGTSEYEED. Residues 1077 to 1091 are compositionally biased toward polar residues; that stretch reads RRNTPSRPTYESLGT.

Belongs to the RNA polymerase beta chain family. In cyanobacteria the RNAP catalytic core is composed of 2 alpha, 1 beta, 1 beta', 1 gamma and 1 omega subunit. When a sigma factor is associated with the core the holoenzyme is formed, which can initiate transcription.

The enzyme catalyses RNA(n) + a ribonucleoside 5'-triphosphate = RNA(n+1) + diphosphate. In terms of biological role, DNA-dependent RNA polymerase catalyzes the transcription of DNA into RNA using the four ribonucleoside triphosphates as substrates. This is DNA-directed RNA polymerase subunit beta from Prochlorococcus marinus (strain MIT 9312).